The sequence spans 526 residues: Bifunctional purine biosynthesis protein PurH (526 aa).

In terms of domain architecture, MGS-like spans 15–161 (DVVPIRRALI…KNHANVAIVV (147 aa)).

Belongs to the PurH family.

It carries out the reaction (6R)-10-formyltetrahydrofolate + 5-amino-1-(5-phospho-beta-D-ribosyl)imidazole-4-carboxamide = 5-formamido-1-(5-phospho-D-ribosyl)imidazole-4-carboxamide + (6S)-5,6,7,8-tetrahydrofolate. It catalyses the reaction IMP + H2O = 5-formamido-1-(5-phospho-D-ribosyl)imidazole-4-carboxamide. It functions in the pathway purine metabolism; IMP biosynthesis via de novo pathway; 5-formamido-1-(5-phospho-D-ribosyl)imidazole-4-carboxamide from 5-amino-1-(5-phospho-D-ribosyl)imidazole-4-carboxamide (10-formyl THF route): step 1/1. The protein operates within purine metabolism; IMP biosynthesis via de novo pathway; IMP from 5-formamido-1-(5-phospho-D-ribosyl)imidazole-4-carboxamide: step 1/1. This chain is Bifunctional purine biosynthesis protein PurH, found in Leifsonia xyli subsp. xyli (strain CTCB07).